The sequence spans 73 residues: U3-agatoxin-Ao1j (73 aa).

The N-terminal stretch at 1–20 is a signal peptide; the sequence is MRTIISLLLLSAMVFAVIEA. Residues 21-34 constitute a propeptide that is removed on maturation; it reads ISLEEGLQLFEGER. Disulfide bonds link C36–C52, C43–C57, C51–C67, and C59–C65. At S71 the chain carries Serine amide.

Belongs to the neurotoxin 07 (Beta/delta-agtx) family. 03 (aga-4) subfamily. Aga sub-subfamily. As to expression, expressed by the venom gland.

The protein resides in the secreted. Functionally, insecticidal neurotoxin that induces an irreversible spastic paralysis when injected into insects. Modifies presynaptic voltage-gated sodium channels (Nav), causing them to open at the normal resting potential of the nerve. This leads to spontaneous release of neurotransmitter and repetitive action potentials in motor neurons. This chain is U3-agatoxin-Ao1j, found in Agelena orientalis (Funnel-web spider).